Consider the following 234-residue polypeptide: Ras-related protein Rab-20 (234 aa).

GTP-binding residues include Gly-17, Lys-18, Thr-19, Asp-32, and Thr-36. Mg(2+) is bound at residue Thr-19. Short sequence motifs (switch) lie at residues 28-41 and 55-72; these read RRFP…GGAF and DTAG…YCRG. The Mg(2+) site is built by Thr-36 and Asp-55. Gly-58, Asn-113, Lys-114, and Asp-116 together coordinate GTP. Residues 125 to 144 form a disordered region; it reads GQEKEECSPNMDAGDRVSPR. The span at 126–142 shows a compositional bias: basic and acidic residues; the sequence is QEKEECSPNMDAGDRVS. GTP contacts are provided by Ala-184 and Lys-185. The tract at residues 212 to 234 is disordered; sequence RPSHTVDISSHKPPKRTRSGCCA. The span at 223-234 shows a compositional bias: basic residues; that stretch reads KPPKRTRSGCCA. Residues Cys-232 and Cys-233 are each lipidated (S-geranylgeranyl cysteine).

It belongs to the small GTPase superfamily. Rab family. The cofactor is Mg(2+). Low or absent expression in normal pancreas and stronger expression in 15 of 18 exocrine pancreatic adenocarcinomas (at protein level).

The protein resides in the golgi apparatus. It is found in the cytoplasmic vesicle. The protein localises to the phagosome. It localises to the phagosome membrane. The enzyme catalyses GTP + H2O = GDP + phosphate + H(+). With respect to regulation, regulated by guanine nucleotide exchange factors (GEFs) which promote the exchange of bound GDP for free GTP. Regulated by GTPase activating proteins (GAPs) which increase the GTP hydrolysis activity. Inhibited by GDP dissociation inhibitors (GDIs). The small GTPases Rab are key regulators of intracellular membrane trafficking, from the formation of transport vesicles to their fusion with membranes. Rabs cycle between an inactive GDP-bound form and an active GTP-bound form that is able to recruit to membranes different sets of downstream effectors directly responsible for vesicle formation, movement, tethering and fusion. RAB20 plays a role in apical endocytosis/recycling. Plays a role in the maturation and acidification of phagosomes that engulf pathogens, such as S.aureus and M.tuberculosis. Plays a role in the fusion of phagosomes with lysosomes. This Homo sapiens (Human) protein is Ras-related protein Rab-20.